We begin with the raw amino-acid sequence, 522 residues long: Zinc finger protein 329 (522 aa).

Residue Ser-30 is modified to Phosphoserine. 12 consecutive C2H2-type zinc fingers follow at residues 184 to 206 (YKCA…HRTH), 212 to 234 (YTCN…RRIH), 240 to 262 (YKCS…QRIH), 268 to 290 (YACL…QRTH), 296 to 318 (YRCN…LRIH), 324 to 346 (YECS…ERTH), 352 to 374 (FECV…QKIH), 380 to 402 (YECK…QRVH), 408 to 430 (YGCN…QRIH), 436 to 458 (YECN…QRIH), 464 to 486 (YQCL…QRLH), and 492 to 514 (SQCP…QRTH).

This sequence belongs to the krueppel C2H2-type zinc-finger protein family.

Its subcellular location is the nucleus. Functionally, may be involved in transcriptional regulation. The polypeptide is Zinc finger protein 329 (Znf329) (Mus musculus (Mouse)).